A 350-amino-acid chain; its full sequence is Sodium/calcium exchanger MaX1 (350 aa).

10 helical membrane-spanning segments follow: residues 4 to 24 (VNFL…DYFV), 39 to 59 (FVIG…ASSI), 69 to 89 (IVIG…VGVA), 101 to 121 (MLKR…VFAF), 125 to 145 (LSML…FFLF), 202 to 222 (GGFA…VIGA), 242 to 264 (VIGT…VSAA), 276 to 296 (VIGS…LFYP), 302 to 322 (MSLF…LIFI), and 330 to 350 (RWEG…LFYI).

Belongs to the Ca(2+):cation antiporter (CaCA) (TC 2.A.19) family.

It is found in the cell membrane. Calcium transport is inhibited by Na(+), K(+), Li(+), Mg(2+) or Mn(2+). Catalyzes Na(+)/Ca(2+) exchange. The transport is electrogenic with a likely stoichiometry of 3 or more Na(+) for each Ca(2+). Is K(+)-independent. The protein is Sodium/calcium exchanger MaX1 (maX1) of Methanosarcina acetivorans (strain ATCC 35395 / DSM 2834 / JCM 12185 / C2A).